The chain runs to 46 residues: U-limacoditoxin(6)-Dv61 (46 aa).

A signal peptide spans 1–19 (MSKLLVLLMTTALATLAQA).

It belongs to the limacoditoxin-6 family. In terms of tissue distribution, expressed by the venom secretory cell of the spine. The spine is a cuticular structure containing a single large nucleated venom-secreting cell at its base. It is an independent unit capable of producing, storing and injecting venom. On the back of D.vulnerans caterpillars, spines are grouped together by 50 to 100 to form scoli, of which there are eight in D.vulnerans.

The protein resides in the secreted. Probable toxin. Does not show insecticidal, antimicrobial and antiparasitic activities. Does not induce increase in intracellular calcium in mouse DRG neurons, suggesting that it does not induce pain. The sequence is that of U-limacoditoxin(6)-Dv61 from Doratifera vulnerans (Mottled cup moth).